A 602-amino-acid chain; its full sequence is Glutamine--fructose-6-phosphate aminotransferase [isomerizing] (602 aa).

Cys2 acts as the Nucleophile; for GATase activity in catalysis. Positions 2-219 (CGIIGYIGDR…DGEYAILTKD (218 aa)) constitute a Glutamine amidotransferase type-2 domain. SIS domains follow at residues 280–420 (VAEE…VLGT) and 453–592 (LAET…PDKP). Lys597 functions as the For Fru-6P isomerization activity in the catalytic mechanism.

Homodimer.

It localises to the cytoplasm. The enzyme catalyses D-fructose 6-phosphate + L-glutamine = D-glucosamine 6-phosphate + L-glutamate. Its function is as follows. Catalyzes the first step in hexosamine metabolism, converting fructose-6P into glucosamine-6P using glutamine as a nitrogen source. In Thermococcus kodakarensis (strain ATCC BAA-918 / JCM 12380 / KOD1) (Pyrococcus kodakaraensis (strain KOD1)), this protein is Glutamine--fructose-6-phosphate aminotransferase [isomerizing].